A 418-amino-acid chain; its full sequence is UDP-N-acetylglucosamine 1-carboxyvinyltransferase (418 aa).

22–23 (KN) contributes to the phosphoenolpyruvate binding site. Arg93 lines the UDP-N-acetyl-alpha-D-glucosamine pocket. Catalysis depends on Cys117, which acts as the Proton donor. Cys117 carries the 2-(S-cysteinyl)pyruvic acid O-phosphothioketal modification. Positions 306 and 328 each coordinate UDP-N-acetyl-alpha-D-glucosamine.

It belongs to the EPSP synthase family. MurA subfamily.

The protein resides in the cytoplasm. The enzyme catalyses phosphoenolpyruvate + UDP-N-acetyl-alpha-D-glucosamine = UDP-N-acetyl-3-O-(1-carboxyvinyl)-alpha-D-glucosamine + phosphate. It functions in the pathway cell wall biogenesis; peptidoglycan biosynthesis. Functionally, cell wall formation. Adds enolpyruvyl to UDP-N-acetylglucosamine. The sequence is that of UDP-N-acetylglucosamine 1-carboxyvinyltransferase from Hydrogenovibrio crunogenus (strain DSM 25203 / XCL-2) (Thiomicrospira crunogena).